The following is a 275-amino-acid chain: Large ribosomal subunit protein uL2c (275 aa).

The interval 28–53 is disordered; sequence TPTKSLTHANHRARGRNHSGSITTRW.

The protein belongs to the universal ribosomal protein uL2 family. Part of the 50S ribosomal subunit.

It is found in the plastid. The protein resides in the chloroplast. In Nephroselmis olivacea (Green alga), this protein is Large ribosomal subunit protein uL2c (rpl2).